A 760-amino-acid polypeptide reads, in one-letter code: Translocation protein SEC63 homolog (760 aa).

At 1–14 (MAGQQFQYDDSGNT) the chain is on the lumenal side. A helical membrane pass occupies residues 15–35 (FFYFLTSFVGLIVIPATYYLW). The Cytoplasmic segment spans residues 36–69 (PRDQNAEQIRLKNIRKVYGRCMWYRLRLLKPQPN). Residues 70 to 90 (IIPTVKKIVLLAGWALFLFLA) traverse the membrane as a helical segment. Topologically, residues 91–188 (YKVSKTDREY…LPAWIVDQKN (98 aa)) are lumenal. The 62-residue stretch at 104–165 (NPYEVLNLDP…ESRKNWEEFG (62 aa)) folds into the J domain. Residues 189–209 (SILVLLVYGLAFMVILPVVVG) traverse the membrane as a helical segment. The region spanning 197–541 (GLAFMVILPV…LKKKPTPVLL (345 aa)) is the SEC63 1 domain. The Cytoplasmic portion of the chain corresponds to 210-760 (SWWYRSIRYS…EEEEEEEDDD (551 aa)). The tract at residues 492–617 (AEEQPAEDGQ…DDEAEWQELQ (126 aa)) is disordered. Residues 518-536 (KGPKKTAKSKKKKPLKKKP) are compositionally biased toward basic residues. Position 537 is a phosphothreonine (T537). Basic and acidic residues predominate over residues 582-608 (NRDSQSEKDDGSDRDSDREQDEKQNKD). A coiled-coil region spans residues 597–635 (SDREQDEKQNKDDEAEWQELQQSIQRKERALLETKSKIT). The SEC63 2 domain occupies 637–714 (PVYSLYFPEE…GLDQIKPLKL (78 aa)). The segment at 720–760 (KPVPENHPQWDTAIEGDEDQEDSEGFEDSFEEEEEEEEDDD) is disordered. Positions 733–760 (IEGDEDQEDSEGFEDSFEEEEEEEEDDD) are enriched in acidic residues. S742 and S748 each carry phosphoserine.

In terms of assembly, the ER translocon complex consists of channel-forming core components SEC61A1, SEC61B and SEC61G and different auxiliary components such as SEC62 and SEC63. Widely expressed, with high levels in the liver.

The protein resides in the endoplasmic reticulum membrane. In terms of biological role, mediates cotranslational and post-translational transport of certain precursor polypeptides across endoplasmic reticulum (ER). Proposed to play an auxiliary role in recognition of precursors with short and apolar signal peptides. May cooperate with SEC62 and HSPA5/BiP to facilitate targeting of small presecretory proteins into the SEC61 channel-forming translocon complex, triggering channel opening for polypeptide translocation to the ER lumen. Required for efficient PKD1/Polycystin-1 biogenesis and trafficking to the plasma membrane of the primary cilia. The polypeptide is Translocation protein SEC63 homolog (Homo sapiens (Human)).